Reading from the N-terminus, the 241-residue chain is Parkin coregulated gene protein homolog (241 aa).

In terms of assembly, microtubule inner protein component of sperm flagellar doublet microtubules. Forms a large molecular chaperone complex containing heat shock proteins 70 and 90 and chaperonin components. Interacts with STIP1, PRKN, GPR37, HSPA8, TCP1/CCT1, CCT2, CCT3, CCT4, CCT5, CCT6A, CCT7 and CCT8. Interacts with MEIG1.

It localises to the cytoplasm. The protein localises to the cytoskeleton. Its subcellular location is the cilium axoneme. The protein resides in the flagellum axoneme. In terms of biological role, microtubule inner protein (MIP) part of the dynein-decorated doublet microtubules (DMTs) in cilia axoneme, which is required for motile cilia beating. Suppresses cell death induced by accumulation of unfolded Pael receptor (Pael-R, a substrate of Parkin). Facilitates the formation of inclusions consisting of Pael-R, molecular chaperones, protein degradation molecules and itself when proteasome is inhibited. May play an important role in the formation of Lewy bodies and protection of dopaminergic neurons against Parkinson disease. The protein is Parkin coregulated gene protein homolog (Pacrg) of Mus musculus (Mouse).